Consider the following 301-residue polypeptide: Retinochrome (301 aa).

Residues M1–E17 are Extracellular-facing. Residues H18–L43 traverse the membrane as a helical segment. At A44 to Y54 the chain is on the cytoplasmic side. The helical transmembrane segment at A55–S76 threads the bilayer. At S77 to G94 the chain is on the extracellular side. Residues F95 to C120 form a helical membrane-spanning segment. Residues H121 to Y132 are Cytoplasmic-facing. A helical transmembrane segment spans residues Y133–L153. Residues G154–S180 are Extracellular-facing. N170 carries N-linked (GlcNAc...) asparagine glycosylation. The helical transmembrane segment at Y181–L208 threads the bilayer. The Cytoplasmic segment spans residues S209–A230. Residues L231–L255 traverse the membrane as a helical segment. Over T256 to H264 the chain is Extracellular. A helical transmembrane segment spans residues L265 to T289. K275 carries the post-translational modification N6-(retinylidene)lysine. Residues A290–P301 lie on the Cytoplasmic side of the membrane.

This sequence belongs to the G-protein coupled receptor 1 family. Opsin subfamily. In terms of tissue distribution, mainly stored in myeloid bodies of the inner segments.

The protein resides in the membrane. Retinochrome is capable of acting as an effective catalyst in the light to convert various isomers of retinal into 11-cis, the form that is required by opsin to resynthesize rhodopsin. This chain is Retinochrome, found in Todarodes pacificus (Japanese flying squid).